Here is a 923-residue protein sequence, read N- to C-terminus: Neuropilin-1 (923 aa).

A signal peptide spans 1 to 21; the sequence is MERGLPLLCAVLALVLAPAGA. At 22–856 the chain is on the extracellular side; sequence FRNDKCGDTI…PGNVLKTLDP (835 aa). 3 disulfide bridges follow: C27–C54, C82–C104, and C147–C173. CUB domains are found at residues 27–141 and 147–265; these read CGDT…YEIF and CSQN…YSVL. A glycan (N-linked (GlcNAc...) asparagine) is linked at N150. 3 residues coordinate Ca(2+): E195, D209, and D250. Residues C206 and C228 are joined by a disulfide bond. Residues N261, N300, and N522 are each glycosylated (N-linked (GlcNAc...) asparagine). 2 disulfide bridges follow: C275–C424 and C431–C583. 2 F5/8 type C domains span residues 275 to 424 and 431 to 583; these read CMEA…VYGC and CSGM…LLGC. S612 is a glycosylation site (O-linked (Xyl...) (chondroitin sulfate) serine; alternate). O-linked (Xyl...) (heparan sulfate) serine; alternate glycosylation occurs at S612. Residues 645-811 form the MAM domain; it reads TYGFNCEFGW…NHISQEDCAK (167 aa). Residues 820–845 are disordered; the sequence is PEIKIDETGSTPGYEGEGEGDKNISR. A glycan (O-linked (Xyl...) (chondroitin sulfate) serine) is linked at S829. N842 carries N-linked (GlcNAc...) asparagine glycosylation. A helical transmembrane segment spans residues 857–879; that stretch reads ILITIIAMSALGVLLGAVCGVVL. Over 880–923 the chain is Cytoplasmic; sequence YCACWHNGMSERNLSALENYNFELVDGVKLKKDKLNTQSTYSEA. S894 carries the post-translational modification Phosphoserine.

The protein belongs to the neuropilin family. Homodimer, and heterodimer with NRP2. Interacts with FER. Interacts with PLXNB1. Interacts with VEGFA. Interacts with ABCB8/MITOSUR in mitochondria. As to quaternary structure, (Microbial infection) Interacts with SARS coronavirus-2/SARS-CoV-2 spike protein S1 (via the CendR motif RRAR). The expression of isoforms 1 and 2 does not seem to overlap. Expressed in olfactory epithelium (at protein level). Expressed in fibroblasts (at protein level). Expressed by the blood vessels of different tissues. In the developing embryo it is found predominantly in the nervous system. In adult tissues, it is highly expressed in heart and placenta; moderately in lung, liver, skeletal muscle, kidney and pancreas; and low in adult brain. Expressed in the central nervous system, including olfactory related regions such as the olfactory tubercles and paraolfactory gyri. In terms of tissue distribution, the expression of isoforms 1 and 2 does not seem to overlap. Found in liver hepatocytes, kidney distal and proximal tubules.

Its subcellular location is the secreted. The protein localises to the mitochondrion membrane. It localises to the cell membrane. The protein resides in the cytoplasm. Functionally, cell-surface receptor involved in the development of the cardiovascular system, in angiogenesis, in the formation of certain neuronal circuits and in organogenesis outside the nervous system. Mediates the chemorepulsant activity of semaphorins. Recognizes a C-end rule (CendR) motif R/KXXR/K on its ligands which causes cellular internalization and vascular leakage. It binds to semaphorin 3A, the PLGF-2 isoform of PGF, the VEGF165 isoform of VEGFA and VEGFB. Coexpression with KDR results in increased VEGF165 binding to KDR as well as increased chemotaxis. Regulates VEGF-induced angiogenesis. Binding to VEGFA initiates a signaling pathway needed for motor neuron axon guidance and cell body migration, including for the caudal migration of facial motor neurons from rhombomere 4 to rhombomere 6 during embryonic development. Regulates mitochondrial iron transport via interaction with ABCB8/MITOSUR. Its function is as follows. (Microbial infection) Acts as a host factor for human coronavirus SARS-CoV-2 infection. Recognizes and binds to CendR motif RRAR on SARS-CoV-2 spike protein S1 which enhances SARS-CoV-2 infection. In terms of biological role, binds VEGF-165 and may inhibit its binding to cells. May induce apoptosis by sequestering VEGF-165. May bind as well various members of the semaphorin family. Its expression has an averse effect on blood vessel number and integrity. The polypeptide is Neuropilin-1 (Homo sapiens (Human)).